A 114-amino-acid chain; its full sequence is Ribonuclease P protein component (114 aa).

This sequence belongs to the RnpA family. As to quaternary structure, consists of a catalytic RNA component (M1 or rnpB) and a protein subunit.

It carries out the reaction Endonucleolytic cleavage of RNA, removing 5'-extranucleotides from tRNA precursor.. Functionally, RNaseP catalyzes the removal of the 5'-leader sequence from pre-tRNA to produce the mature 5'-terminus. It can also cleave other RNA substrates such as 4.5S RNA. The protein component plays an auxiliary but essential role in vivo by binding to the 5'-leader sequence and broadening the substrate specificity of the ribozyme. In Lactiplantibacillus plantarum (strain ATCC BAA-793 / NCIMB 8826 / WCFS1) (Lactobacillus plantarum), this protein is Ribonuclease P protein component.